Reading from the N-terminus, the 327-residue chain is tRNA N6-adenosine threonylcarbamoyltransferase (327 aa).

Fe cation is bound by residues His-109 and His-113. Residues 132–136 (MVSGG), Asp-165, Gly-178, Asp-182, and Asn-268 each bind substrate. Residue Asp-296 participates in Fe cation binding.

It belongs to the KAE1 / TsaD family. Fe(2+) is required as a cofactor.

Its subcellular location is the cytoplasm. It carries out the reaction L-threonylcarbamoyladenylate + adenosine(37) in tRNA = N(6)-L-threonylcarbamoyladenosine(37) in tRNA + AMP + H(+). Required for the formation of a threonylcarbamoyl group on adenosine at position 37 (t(6)A37) in tRNAs that read codons beginning with adenine. Is involved in the transfer of the threonylcarbamoyl moiety of threonylcarbamoyl-AMP (TC-AMP) to the N6 group of A37, together with TsaE and TsaB. TsaD likely plays a direct catalytic role in this reaction. This chain is tRNA N6-adenosine threonylcarbamoyltransferase, found in Thermotoga neapolitana (strain ATCC 49049 / DSM 4359 / NBRC 107923 / NS-E).